The sequence spans 333 residues: Protein XAP5 CIRCADIAN TIMEKEEPER (333 aa).

2 coiled-coil regions span residues 12 to 43 and 70 to 116; these read AQDA…SDGQ and TREQ…VRGD. Residues 89-98 are compositionally biased toward basic and acidic residues; the sequence is EKEKLQKLQQ. The segment at 89–171 is disordered; the sequence is EKEKLQKLQQ…REREAEEQAE (83 aa). A compositionally biased stretch (acidic residues) spans 123 to 136; sequence DEIENGSDEDEFEN. The segment covering 160–171 has biased composition (basic and acidic residues); it reads PDREREAEEQAE.

The protein belongs to the FAM50 family.

The protein resides in the nucleus. Involved in light regulation of the circadian clock and photomorphogenesis. This is Protein XAP5 CIRCADIAN TIMEKEEPER (XCT) from Oryza sativa subsp. indica (Rice).